A 284-amino-acid polypeptide reads, in one-letter code: Pantothenate synthetase (284 aa).

30–37 (MGALHNGH) serves as a coordination point for ATP. His37 serves as the catalytic Proton donor. Gln61 is a (R)-pantoate binding site. Beta-alanine is bound at residue Gln61. Residue 147–150 (GEKD) participates in ATP binding. Gln153 is a binding site for (R)-pantoate. ATP contacts are provided by residues Leu176 and 184–187 (SSSR).

This sequence belongs to the pantothenate synthetase family. As to quaternary structure, homodimer.

The protein resides in the cytoplasm. It catalyses the reaction (R)-pantoate + beta-alanine + ATP = (R)-pantothenate + AMP + diphosphate + H(+). It participates in cofactor biosynthesis; (R)-pantothenate biosynthesis; (R)-pantothenate from (R)-pantoate and beta-alanine: step 1/1. Its function is as follows. Catalyzes the condensation of pantoate with beta-alanine in an ATP-dependent reaction via a pantoyl-adenylate intermediate. The protein is Pantothenate synthetase of Bartonella henselae (strain ATCC 49882 / DSM 28221 / CCUG 30454 / Houston 1) (Rochalimaea henselae).